Here is an 89-residue protein sequence, read N- to C-terminus: Signal recognition particle 19 kDa protein (89 aa).

This sequence belongs to the SRP19 family. Part of the signal recognition particle protein translocation system, which is composed of SRP and FtsY. Archaeal SRP consists of a 7S RNA molecule of 300 nucleotides and two protein subunits: SRP54 and SRP19.

It localises to the cytoplasm. Functionally, involved in targeting and insertion of nascent membrane proteins into the cytoplasmic membrane. Binds directly to 7S RNA and mediates binding of the 54 kDa subunit of the SRP. In Methanococcus maripaludis (strain C5 / ATCC BAA-1333), this protein is Signal recognition particle 19 kDa protein.